The chain runs to 503 residues: Puromycin resistance protein pur8 (503 aa).

The Cytoplasmic portion of the chain corresponds to 1–24 (MARKPDISAVPVESAACQGPDPRR). A helical membrane pass occupies residues 25-45 (WWGLVVILAAQLLVVLDGTVV). The Extracellular portion of the chain corresponds to 46 to 64 (NIALPSVQRDLGMSDTSRQ). The chain crosses the membrane as a helical span at residues 65 to 85 (WVITAYTLAFGGLLLLGGRVA). Residues 86–92 (DAFGRRR) lie on the Cytoplasmic side of the membrane. A helical membrane pass occupies residues 93–113 (IFAVGILGFGLASLLGGAAPD). Residues 114-122 (PGTLFLARA) lie on the Extracellular side of the membrane. A helical transmembrane segment spans residues 123 to 143 (LQGVFAAALAPAALALINTLF). Over 144–152 (TEPGERGKA) the chain is Cytoplasmic. Residues 153-173 (FGVYGAVSGGGAAVGLLAGGL) form a helical membrane-spanning segment. Topologically, residues 174 to 181 (LTEYLDWR) are extracellular. The helical transmembrane segment at 182–202 (WCLYVNAPVALLALLGCRLLP) threads the bilayer. The Cytoplasmic segment spans residues 203–212 (RDRRTGRAVR). The helical transmembrane segment at 213-233 (LDLPGTLLGCGGLVAIVYAFA) threads the bilayer. Residues 234 to 241 (EAESGWGD) are Extracellular-facing. The chain crosses the membrane as a helical span at residues 242-262 (PLVVRLLVLGVLMLVAFALVE). The Cytoplasmic portion of the chain corresponds to 263–280 (RRVQDPLLPPGVVAHRVR). The helical transmembrane segment at 281 to 301 (GGSFLVVGLPQIGLFGLFLFL) threads the bilayer. Residues 302–313 (TYYLQGILDYSP) lie on the Extracellular side of the membrane. The chain crosses the membrane as a helical span at residues 314 to 334 (VLTGVAFLPLGLGIAVGSSLI). Residues 335–346 (AARLLPRTRPRT) lie on the Cytoplasmic side of the membrane. A helical transmembrane segment spans residues 347 to 367 (LIVGALLAAAAGMALLTRLEP). At 368–371 (DTPQ) the chain is on the extracellular side. The chain crosses the membrane as a helical span at residues 372–392 (VYLTHLLPAQILIGLGIGCMM). Residues 393–422 (MPAMHTATARVAPHEAGAAAAVVNSAQQVG) lie on the Cytoplasmic side of the membrane. A helical membrane pass occupies residues 423 to 443 (GALGVALLNTVSTGATAAYLA). The Extracellular portion of the chain corresponds to 444–461 (DHGTSPAATVDGTVHGYT). Residues 462 to 482 (VAIAFAVGVLLLTAVLAWVLI) form a helical membrane-spanning segment. The Cytoplasmic segment spans residues 483–503 (DSRTEAADETGSASVTPARPR).

It belongs to the major facilitator superfamily. EmrB family.

It is found in the cell membrane. May be involved in active puromycin efflux energized by a proton-dependent electrochemical gradient. In addition, it could be implicated in secreting N-acetylpuromycin, the last intermediate of the puromycin biosynthesis pathway, to the environment. The sequence is that of Puromycin resistance protein pur8 (pur8) from Streptomyces alboniger.